Here is a 202-residue protein sequence, read N- to C-terminus: Putative scarecrow-like protein 16 (202 aa).

Residues 1–26 (MQIPTLIDSMANKLHKKPPPLLKLTV) form a VHIID region. In terms of domain architecture, GRAS spans 1–202 (MQIPTLIDSM…RVERLEPKSR (202 aa)). The interval 45-82 (ELGSKLVNFATTRNVAMEFRIISSSYSDGLSSLIEQLR) is leucine repeat II (LRII). The tract at residues 92–184 (LVVNCHMMLH…EADISWKIDN (93 aa)) is PFYRE. The SAW stretch occupies residues 187–202 (AKEGAERVERLEPKSR).

Belongs to the GRAS family. In terms of tissue distribution, expressed in seedlings, leaves and flowers.

The protein resides in the nucleus. Functionally, probable transcription factor involved in plant development. This Arabidopsis thaliana (Mouse-ear cress) protein is Putative scarecrow-like protein 16 (SCL16).